A 421-amino-acid polypeptide reads, in one-letter code: Immunoglobulin heavy constant epsilon (421 aa).

Ig-like domains follow at residues 5-97 (PQLY…VNIT), 99-184 (PTLE…KVTS), 201-301 (PRGV…RSIT), and 310-410 (PEVY…KTIS). A disulfide bond links cysteine 23 and cysteine 75. 9 N-linked (GlcNAc...) asparagine glycosylation sites follow: asparagine 43, asparagine 72, asparagine 84, asparagine 95, asparagine 166, asparagine 238, asparagine 261, asparagine 365, and asparagine 415. Disulfide bonds link cysteine 121/cysteine 180, cysteine 226/cysteine 285, and cysteine 330/cysteine 392.

As to quaternary structure, the basic structural unit consists of two identical heavy chains and two identical light chains; disulfide-linked. N-terminal variable regions of the heavy and light chains form the antigen binding sites, whereas the C-terminal constant regions of the heavy chains interact with immune receptors to mediate effector functions.

The protein resides in the secreted. The protein localises to the cell membrane. Constant region of immunoglobulin heavy chains. Immunoglobulins, also known as antibodies, are membrane-bound or secreted glycoproteins produced by B lymphocytes. In the recognition phase of humoral immunity, the membrane-bound immunoglobulins serve as receptors which, upon binding of a specific antigen, trigger the clonal expansion and differentiation of B lymphocytes into immunoglobulins-secreting plasma cells. Secreted immunoglobulins mediate the effector phase of humoral immunity, which results in the elimination of bound antigens. The antigen binding site is formed by the variable domain of one heavy chain, together with that of its associated light chain. Thus, each immunoglobulin has two antigen binding sites with remarkable affinity for a particular antigen. The variable domains are assembled by a process called V-(D)-J rearrangement and can then be subjected to somatic hypermutations which, after exposure to antigen and selection, allow affinity maturation for a particular antigen. The sequence is that of Immunoglobulin heavy constant epsilon from Mus musculus (Mouse).